The chain runs to 412 residues: Probable tRNA sulfurtransferase (412 aa).

Residues 1–22 form a disordered region; the sequence is MPDIFTDNTDKQDSDPSRQGFE. Positions 82–190 constitute a THUMP domain; sequence PRAAEAAADV…QNLAYVYLET (109 aa). ATP contacts are provided by residues 208-209, Lys292, Gly314, and Gln323; that span reads LM.

Belongs to the ThiI family.

It localises to the cytoplasm. The catalysed reaction is [ThiI sulfur-carrier protein]-S-sulfanyl-L-cysteine + a uridine in tRNA + 2 reduced [2Fe-2S]-[ferredoxin] + ATP + H(+) = [ThiI sulfur-carrier protein]-L-cysteine + a 4-thiouridine in tRNA + 2 oxidized [2Fe-2S]-[ferredoxin] + AMP + diphosphate. It carries out the reaction [ThiS sulfur-carrier protein]-C-terminal Gly-Gly-AMP + S-sulfanyl-L-cysteinyl-[cysteine desulfurase] + AH2 = [ThiS sulfur-carrier protein]-C-terminal-Gly-aminoethanethioate + L-cysteinyl-[cysteine desulfurase] + A + AMP + 2 H(+). Its pathway is cofactor biosynthesis; thiamine diphosphate biosynthesis. Its function is as follows. Catalyzes the ATP-dependent transfer of a sulfur to tRNA to produce 4-thiouridine in position 8 of tRNAs, which functions as a near-UV photosensor. Also catalyzes the transfer of sulfur to the sulfur carrier protein ThiS, forming ThiS-thiocarboxylate. This is a step in the synthesis of thiazole, in the thiamine biosynthesis pathway. The sulfur is donated as persulfide by IscS. In Methanosarcina acetivorans (strain ATCC 35395 / DSM 2834 / JCM 12185 / C2A), this protein is Probable tRNA sulfurtransferase.